A 92-amino-acid polypeptide reads, in one-letter code: Small ribosomal subunit protein bS20 (92 aa).

The segment at 1–23 is disordered; the sequence is MANTPSAKKRAKQAEKRRSHNAS. A compositionally biased stretch (basic residues) spans 7–20; it reads AKKRAKQAEKRRSH.

Belongs to the bacterial ribosomal protein bS20 family.

Binds directly to 16S ribosomal RNA. The chain is Small ribosomal subunit protein bS20 from Pseudomonas fluorescens (strain SBW25).